Reading from the N-terminus, the 57-residue chain is uncharacterized protein (57 aa).

Proetin of unknown function whose overexpression causes growth inhibition. Overexpression increases the expression of ergosterol synthesis genes. This is an uncharacterized protein from Saccharomyces cerevisiae (strain ATCC 204508 / S288c) (Baker's yeast).